Here is a 607-residue protein sequence, read N- to C-terminus: WD repeat-containing protein 1 (607 aa).

13 WD repeats span residues 4–45 (ELKK…IRNI), 48–87 (PAIA…IWDT), 93–135 (LLKY…LWDT), 138–176 (SVGE…FFEG), 180–218 (KFKF…LYDG), 224–263 (VGNL…IWDV), 270–306 (TTFH…YLDK), 311–351 (RPLR…YWDA), 358–408 (TFTG…KMDV), 432–474 (LKDK…LYSI), 480–518 (KDEG…VFNV), 523–561 (SEQN…VWTL), and 566–604 (ARIK…QWTV).

It belongs to the WD repeat AIP1 family.

It is found in the cell membrane. It localises to the cytoplasm. The protein localises to the cytoskeleton. Its subcellular location is the nucleus. Induces disassembly of actin filaments in conjunction with ADF/cofilin family proteins. Doesn't sever actin filaments alone, but caps the barbed ends of filaments severed by cofilin, which blocks annealing and depolymerization and allows more extensive severing by cofilin. The sequence is that of WD repeat-containing protein 1 from Xenopus tropicalis (Western clawed frog).